Here is a 1121-residue protein sequence, read N- to C-terminus: Pleckstrin homology domain-containing family A member 7 (1121 aa).

WW domains are found at residues 9–42 (DTLPEHWSYGVCRDGRVFFINDQLRCTTWLHPRT) and 54–87 (SDLPRGWEEGFTEEGASYFIDHNQQTTAFRHPVT). Residues 105–137 (PHMSKQDRNQRPSSMVSETSTAGTASTLEAKPG) form a disordered region. Residues 115-131 (RPSSMVSETSTAGTAST) are compositionally biased toward polar residues. In terms of domain architecture, PH spans 164 to 282 (PVVVRGWLHK…WVRAMNQAAQ (119 aa)). The interval 299-514 (QAVPQANHTE…LKMSSEERRA (216 aa)) is disordered. 2 stretches are compositionally biased toward basic and acidic residues: residues 308–356 (ESCH…EGKR) and 437–446 (HWARAQKGDS). The segment covering 460–475 (PGQSLSFPENYQTLPK) has biased composition (polar residues). Over residues 497-514 (YAQDRASHLKMSSEERRA) the composition is skewed to basic and acidic residues. Ser536, Ser545, Ser569, Ser604, Ser608, and Ser612 each carry phosphoserine. The interval 538-696 (TAPICLGSPE…AESDTDVKLS (159 aa)) is interaction with CTNND1. Residues 547 to 632 (EFTDQGRSRS…NSSHVDRRSM (86 aa)) are disordered. Pro residues predominate over residues 567-582 (PPSPSDIPPPGPPRVF). Basic and acidic residues predominate over residues 589-605 (TPAERVTVKPPDQRRSV). Residues 700–801 (EQDRVLQDLE…LQEQHRRAFF (102 aa)) adopt a coiled-coil conformation. Disordered regions lie at residues 841–876 (RKTVPLFPHPPVPSLSTSESKPPPQPSPPTSPVRTP) and 888–971 (YVPY…ELGQ). Phosphoserine occurs at positions 858, 860, and 867. Positions 861–871 (KPPPQPSPPTS) are enriched in pro residues. Thr870 is modified (phosphothreonine). Residues Ser871, Ser903, and Ser907 each carry the phosphoserine modification. Over residues 933–942 (DQPPAVPPLP) the composition is skewed to pro residues. Residues 958 to 969 (RQSDERKRDREL) show a composition bias toward basic and acidic residues. Position 986 is a phosphoserine (Ser986). Disordered stretches follow at residues 1003–1028 (GLVGPESRYQTLPGRGLSGSTSRLQQ) and 1082–1121 (RHQKALVRERKRTLGQGERTGLPSSRYLSRPLPGDLGSVC). A coiled-coil region spans residues 1067–1094 (QRGKMSAEEQLERMKRHQKALVRERKRT). The span at 1082 to 1094 (RHQKALVRERKRT) shows a compositional bias: basic residues.

As to quaternary structure, interacts with CAMSAP3 and CTNND1. Interacts (via WW domains) with TSPAN33 (via cytoplasmic domain) and with PDZD11; the interaction with TSPAN33 is dependent on PDZD11 being bound to PLEKHA7 and facilitates the docking of ADAM10 to zonula adherens through interaction of TSPAN33 with ADAM10.

The protein localises to the cell junction. It is found in the adherens junction. Its subcellular location is the cytoplasm. The protein resides in the cytoskeleton. It localises to the microtubule organizing center. The protein localises to the centrosome. Required for zonula adherens biogenesis and maintenance. Acts via its interaction with CAMSAP3, which anchors microtubules at their minus-ends to zonula adherens, leading to the recruitment of KIFC3 kinesin to the junctional site. Mediates docking of ADAM10 to zonula adherens through a PDZD11-dependent interaction with the ADAM10-binding protein TSPAN33. The polypeptide is Pleckstrin homology domain-containing family A member 7 (PLEKHA7) (Homo sapiens (Human)).